We begin with the raw amino-acid sequence, 444 residues long: Argininosuccinate synthase (444 aa).

ATP is bound by residues 18–26 (AFSGGLDTS) and Ala44. An L-citrulline-binding site is contributed by Tyr100. ATP contacts are provided by Gly130 and Thr132. L-aspartate contacts are provided by Thr132, Asn136, and Asp137. Residue Asn136 participates in L-citrulline binding. An ATP-binding site is contributed by Asp137. L-citrulline is bound by residues Arg140 and Ser193. Position 195 (Asp195) interacts with ATP. 3 residues coordinate L-citrulline: Thr202, Glu204, and Glu281.

This sequence belongs to the argininosuccinate synthase family. Type 2 subfamily. Homotetramer.

It localises to the cytoplasm. The enzyme catalyses L-citrulline + L-aspartate + ATP = 2-(N(omega)-L-arginino)succinate + AMP + diphosphate + H(+). The protein operates within amino-acid biosynthesis; L-arginine biosynthesis; L-arginine from L-ornithine and carbamoyl phosphate: step 2/3. The sequence is that of Argininosuccinate synthase from Mannheimia succiniciproducens (strain KCTC 0769BP / MBEL55E).